Reading from the N-terminus, the 310-residue chain is Glycine-rich RNA-binding protein RZ1C (310 aa).

In terms of domain architecture, RRM spans 7 to 85; the sequence is SRIFVGGLSP…RVISVNRAEP (79 aa). S15 bears the Phosphoserine mark. A disordered region spans residues 82 to 120; that stretch reads RAEPKLGRDDGESHGSRGGRDSGYSIAGKGSFGGGGGGG. The segment covering 83–101 has biased composition (basic and acidic residues); the sequence is AEPKLGRDDGESHGSRGGR. The segment covering 111 to 120 has biased composition (gly residues); the sequence is GSFGGGGGGG. The segment at 128-143 adopts a CCHC-type zinc-finger fold; it reads CFKCGRVGHWARDCPS. Positions 224-310 are disordered; that stretch reads RFAGGDRYSR…YPSSSTFDRY (87 aa). Composition is skewed to basic and acidic residues over residues 226–236 and 244–253; these read AGGDRYSRGSD and DKARSFERDI. A compositionally biased stretch (gly residues) spans 261–273; it reads RYGGGRAGGPIRG. A Phosphoserine modification is found at S295.

Expressed in roots, rosette and cauline leaves, stems, floral buds and flowers.

Its subcellular location is the nucleus. Binds RNA and DNA sequences non-specifically. May be involved in tolerance to cold stress. The polypeptide is Glycine-rich RNA-binding protein RZ1C (Arabidopsis thaliana (Mouse-ear cress)).